A 119-amino-acid polypeptide reads, in one-letter code: Large ribosomal subunit protein bL20 (119 aa).

This sequence belongs to the bacterial ribosomal protein bL20 family.

Functionally, binds directly to 23S ribosomal RNA and is necessary for the in vitro assembly process of the 50S ribosomal subunit. It is not involved in the protein synthesizing functions of that subunit. In Streptococcus suis (strain 98HAH33), this protein is Large ribosomal subunit protein bL20.